Reading from the N-terminus, the 256-residue chain is Phosphonates import ATP-binding protein PhnC (256 aa).

Positions 2 to 246 constitute an ABC transporter domain; sequence LKVIQLDKTY…VLQHIYRQPD (245 aa). 35-42 lines the ATP pocket; the sequence is GPSGAGKT.

It belongs to the ABC transporter superfamily. Phosphonates importer (TC 3.A.1.9.1) family. The complex is composed of two ATP-binding proteins (PhnC), two transmembrane proteins (PhnE) and a solute-binding protein (PhnD).

The protein resides in the cell membrane. The enzyme catalyses phosphonate(out) + ATP + H2O = phosphonate(in) + ADP + phosphate + H(+). Its function is as follows. Part of the ABC transporter complex PhnCDE involved in phosphonates import. Responsible for energy coupling to the transport system. This is Phosphonates import ATP-binding protein PhnC from Lactiplantibacillus plantarum (strain ATCC BAA-793 / NCIMB 8826 / WCFS1) (Lactobacillus plantarum).